The primary structure comprises 559 residues: PHD finger protein 1 (559 aa).

The Tudor domain occupies proline 29 to glutamate 86. 2 consecutive PHD-type zinc fingers follow at residues glutamate 87–alanine 142 and glutamine 186–glycine 240. 2 disordered regions span residues proline 338–arginine 434 and histidine 448–serine 526. The segment covering tryptophan 369–glutamate 386 has biased composition (basic and acidic residues). Composition is skewed to polar residues over residues asparagine 417–tyrosine 426 and proline 449–aspartate 459. A compositionally biased stretch (low complexity) spans serine 481–proline 515.

It belongs to the Polycomblike family. In terms of assembly, associated component of the PRC2 complex. Interacts with p53/TP53. Interacts with CHMP1. In terms of tissue distribution, testis-specific.

Its subcellular location is the nucleus. It localises to the cytoplasm. The protein resides in the cytoskeleton. It is found in the microtubule organizing center. The protein localises to the centrosome. In terms of biological role, polycomb group (PcG) that specifically binds histone H3 trimethylated at 'Lys-36' (H3K36me3) and recruits the PRC2 complex. Involved in DNA damage response and is recruited at double-strand breaks (DSBs). Acts by binding to H3K36me3, a mark for transcriptional activation, and recruiting the PRC2 complex: it is however unclear whether recruitment of the PRC2 complex to H3K36me3 leads to enhance or inhibit H3K27me3 methylation mediated by the PRC2 complex. According to some reports, PRC2 recruitment by PHF1 promotes H3K27me3 and subsequent gene silencing by inducing spreading of PRC2 and H3K27me3 into H3K36me3 loci. According to other reports, PHF1 recruits the PRC2 complex at double-strand breaks (DSBs) and inhibits the activity of PRC2. Regulates p53/TP53 stability and prolonges its turnover: may act by specifically binding to a methylated from of p53/TP53. This chain is PHD finger protein 1 (Phf1), found in Mus musculus (Mouse).